We begin with the raw amino-acid sequence, 349 residues long: N-acetyltaurine hydrolase (349 aa).

His-26, His-28, Glu-169, His-201, His-230, and Asp-298 together coordinate a divalent metal cation.

Belongs to the metallo-dependent hydrolases superfamily. Phosphotriesterase family. Requires a divalent metal cation as cofactor.

It is found in the cytoplasm. The protein localises to the cytosol. It catalyses the reaction N-acetyltaurine + H2O = taurine + acetate. The catalysed reaction is N-propanoyltaurine + H2O = propanoate + taurine. It carries out the reaction N-acetyl-L-methionine + H2O = L-methionine + acetate. The enzyme catalyses N-acetyl-L-isoleucine + H2O = L-isoleucine + acetate. It catalyses the reaction N-acetyl-L-leucine + H2O = L-leucine + acetate. The catalysed reaction is N-acetyl-L-valine + H2O = L-valine + acetate. N-acetyltaurine hydrolase that catalyzes the hydrolysis of N-acetyltaurine into taurine and acetate. PTER also acts on other N-acetyl amino acids (Met, Ile, Leu, Val) and N-propionyltaurine, but at lower rates. This chain is N-acetyltaurine hydrolase (pter), found in Danio rerio (Zebrafish).